The sequence spans 270 residues: Tryptophan 2,3-dioxygenase-like protein (270 aa).

The protein belongs to the tryptophan 2,3-dioxygenase family.

The chain is Tryptophan 2,3-dioxygenase-like protein from Xanthomonas campestris pv. campestris (strain 8004).